Reading from the N-terminus, the 630-residue chain is MLGMYVPDRFSLKSSRVQDGMGLYTARRVRKGEKFGPFAGEKRMPEDLDENMDYRLMWEVRGSKGEVLYILDATNPRHSNWLRFVHEAPSQEQKNLAAIQEGENIFYLAVEDIETDTELLIGYLDSDMEAEEEEQQIMTVIKEGEVENSRRQSTAGRKDRLGCKEDYACPQCESSFTSEDILAEHLQTLHQKPTEEKEFKCKNCGKKFPVKQALQRHVLQCTAKSSLKESSRSFQCSVCNSSFSSASSFEQHQETCRGDARFVCKADSCGKRLKSKDALKRHQENVHTGDPKKKLICSVCNKKCSSASSLQEHRKIHEIFDCQECMKKFISANQLKRHMITHSEKRPYNCEICNKSFKRLDQVGAHKVIHSEDKPYKCKLCGKGFAHRNVYKNHKKTHSEERPFQCEECKALFRTPFSLQRHLLIHNSERTFKCHHCDATFKRKDTLNVHVQVVHERHKKYRCELCNKAFVTPSVLRSHKKTHTGEKEKICPYCGQKFASSGTLRVHIRSHTGERPYQCPYCEKGFSKNDGLKMHIRTHTREKPYKCSECSKAFSQKRGLDEHKRTHTGEKPFQCDVCDLAFSLKKMLIRHKMTHNPNRPLAECQFCHKKFTRNDYLKVHMDNIHGVADS.

In terms of domain architecture, SET spans 8–124 (DRFSLKSSRV…TDTELLIGYL (117 aa)). The C2H2-type 1 zinc finger occupies 167–190 (YACPQCESSFTSEDILAEHLQTLH). The segment at 199 to 221 (FKCKNCGKKFPVKQALQRHVLQC) adopts a C2H2-type 2; atypical zinc-finger fold. The C2H2-type 3; atypical zinc finger occupies 234–256 (FQCSVCNSSFSSASSFEQHQETC). 13 C2H2-type zinc fingers span residues 262–287 (FVCK…ENVH), 295–317 (LICS…RKIH), 320–342 (FDCQ…MITH), 348–370 (YNCE…KVIH), 376–398 (YKCK…KKTH), 404–426 (FQCE…LLIH), 432–455 (FKCH…QVVH), 461–483 (YRCE…KKTH), 489–511 (KICP…IRSH), 517–539 (YQCP…IRTH), 545–567 (YKCS…KRTH), 573–595 (FQCD…KMTH), and 602–625 (AECQ…DNIH).

Belongs to the class V-like SAM-binding methyltransferase superfamily. Interacts with EHMT2/G9A, GFI1 and HDAC1. Widely expressed with highest levels in colon and ovary. Tends to be silenced in breast, colorectal, gastric and liver cancer tissues.

It localises to the nucleus. In terms of biological role, sequence-specific DNA-binding transcription factor. Represses transcription at least in part by recruitment of the histone methyltransferase EHMT2/G9A and histone deacetylases such as HDAC1. Regulates hematopoiesis-associated protein-coding and microRNA (miRNA) genes. May regulate the expression of proteins involved in extracellular matrix development and maintenance, including fibrillar collagens, such as COL4A1 and COL11A1, connective tissue components, such as HAPLN1, and molecules regulating cell migration and adhesion, including EDIL3 and TGFB2. May cause G2/M arrest and apoptosis in cancer cells. The chain is PR domain zinc finger protein 5 (PRDM5) from Homo sapiens (Human).